A 546-amino-acid chain; its full sequence is Glucose-6-phosphate isomerase (546 aa).

The active-site Proton donor is Glu358. Catalysis depends on residues His389 and Lys504.

This sequence belongs to the GPI family.

It localises to the cytoplasm. It catalyses the reaction alpha-D-glucose 6-phosphate = beta-D-fructose 6-phosphate. It participates in carbohydrate biosynthesis; gluconeogenesis. Its pathway is carbohydrate degradation; glycolysis; D-glyceraldehyde 3-phosphate and glycerone phosphate from D-glucose: step 2/4. Catalyzes the reversible isomerization of glucose-6-phosphate to fructose-6-phosphate. The sequence is that of Glucose-6-phosphate isomerase from Desulfosudis oleivorans (strain DSM 6200 / JCM 39069 / Hxd3) (Desulfococcus oleovorans).